Here is a 313-residue protein sequence, read N- to C-terminus: Olfactory receptor 6E1 (313 aa).

An N-linked (GlcNAc...) asparagine glycan is attached at Asn-3. Helical transmembrane passes span 25-45 (IFLGFLLTYFLILLGNFLIIF), 64-84 (FAMLEIWFTSVIFPKMLTNII), 96-116 (FLQAFLYFFLGTTEFFLLAVM), 142-162 (LVFCSWMSGLLLIIVPSSIVF), 192-212 (LVEFLGFVIANFSLLGTLAVT), 238-258 (TCSSHIIVVSLFYGSCIFMYV), and 271-291 (KVVALLNTVVTPTLNPFIYTL). Cys-95 and Cys-177 are disulfide-bonded.

The protein belongs to the G-protein coupled receptor 1 family.

Its subcellular location is the cell membrane. Odorant receptor. Activated by (-)-citronellal and to a lesser extent by (+)-citronellal. Not activated by carvone or limonene. This chain is Olfactory receptor 6E1, found in Mus musculus (Mouse).